The chain runs to 392 residues: Chloramphenicol resistance protein (392 aa).

Transmembrane regions (helical) follow at residues 6 to 26, 42 to 62, 71 to 91, 100 to 120, 129 to 149, 160 to 180, 205 to 225, 239 to 259, 268 to 288, 294 to 314, 332 to 352, and 358 to 378; these read YLLAVAVCAMGTSEFMLAGLV, TLTSAFATGMIVGAPLVAALA, LLGFILAFAAAHAVGAGTTSF, VAALANAGFLAVALTTAAALV, LAVLLSGTTVATVAGVPGGSL, FWAVAVCCLPAAFGVLKAIPA, LLLAMLLGALVNAATFASFTF, LWISVALVLFGAGSFAGVTVA, AQVLAVAGPLLLVGWPALAML, ALLTLVFVQGALSFALGSTLI, ATAALNVGAAAGPLVAATTLG, and LGPLWASGLLVAVALLVAFPF.

This sequence belongs to the major facilitator superfamily.

Its subcellular location is the cell membrane. The chain is Chloramphenicol resistance protein (cmlR) from Streptomyces lividans.